The following is a 721-amino-acid chain: Transcription activator of gluconeogenesis ARB_05058 (721 aa).

Positions 1-34 (MSPHQTTGQESDNMTVNGENAQASSQYIQSNEEM) are enriched in polar residues. Positions 1-62 (MSPHQTTGQE…PSRPKRKKAK (62 aa)) are disordered. Over residues 40 to 55 (TEKKASTAKAAKDPSR) the composition is skewed to basic and acidic residues. The segment at residues 65-93 (CYACQRGHLTCGDERPCQRCIKRGFQDAC) is a DNA-binding region (zn(2)-C6 fungal-type). Disordered stretches follow at residues 128 to 224 (QNNA…FNSA), 263 to 300 (GDTPPSESGAQRGSIGQNGSGTFGLTGSNFSESPSNQA), 353 to 400 (SPAS…TPQL), 533 to 567 (NHNVNTGGSSGLMTGSTSRGSYTPRPYSSEVYNSS), and 635 to 666 (GLNGEAASNETNELNGSLTNGATTNGRGQRRW). 4 stretches are compositionally biased toward polar residues: residues 133 to 213 (GSNT…TPSA), 267 to 277 (PSESGAQRGSI), 287 to 300 (LTGSNFSESPSNQA), and 361 to 379 (MMTTSSATFEDTTNSGAFN). Low complexity-rich tracts occupy residues 380–399 (SRQNVPVSQQRQQPVVSTPQ) and 543–553 (GLMTGSTSRGS). The segment covering 640–661 (AASNETNELNGSLTNGATTNGR) has biased composition (polar residues).

Belongs to the ERT1/acuK family.

The protein resides in the nucleus. In terms of biological role, transcription factor which regulates nonfermentable carbon utilization. Activator of gluconeogenetic genes. The sequence is that of Transcription activator of gluconeogenesis ARB_05058 from Arthroderma benhamiae (strain ATCC MYA-4681 / CBS 112371) (Trichophyton mentagrophytes).